An 86-amino-acid polypeptide reads, in one-letter code: UPF0335 protein mll3968 (86 aa).

The protein belongs to the UPF0335 family.

This is UPF0335 protein mll3968 from Mesorhizobium japonicum (strain LMG 29417 / CECT 9101 / MAFF 303099) (Mesorhizobium loti (strain MAFF 303099)).